Here is a 551-residue protein sequence, read N- to C-terminus: Histone-lysine N-methyltransferase SETDB2 (551 aa).

The region spanning 146 to 210 (LLGHNPLRAP…DRFSFSTQVC (65 aa)) is the MBD domain. In terms of domain architecture, Pre-SET spans 269–329 (VCCDCTDGCT…RCENRVVQKG (61 aa)). The Zn(2+) site is built by Cys-271, Cys-273, Cys-277, Cys-283, Cys-285, Cys-310, Cys-314, Cys-316, and Cys-321. The 206-residue stretch at 332 to 537 (VRLQVFRTPE…AGTELTWSCT (206 aa)) folds into the SET domain. 342–344 (HMW) lines the S-adenosyl-L-methionine pocket. The interval 426–447 (SLAQRRDQQQFSISSETEDNRC) is disordered. S-adenosyl-L-methionine contacts are provided by residues Arg-491 and 494-495 (TH).

The protein belongs to the class V-like SAM-binding methyltransferase superfamily.

Its subcellular location is the nucleus. It is found in the chromosome. The enzyme catalyses N(6),N(6)-dimethyl-L-lysyl(9)-[histone H3] + S-adenosyl-L-methionine = N(6),N(6),N(6)-trimethyl-L-lysyl(9)-[histone H3] + S-adenosyl-L-homocysteine + H(+). Its function is as follows. Histone methyltransferase involved in left-right axis specification in early development and mitosis. Specifically trimethylates 'Lys-9' of histone H3 (H3K9me3). H3K9me3 represents a specific tag for epigenetic transcriptional repression by recruiting HP1 (CBX1, CBX3 and/or CBX5) proteins to methylated histones. Contributes to H3K9me3 in both the interspersed repetitive elements and centromere-associated repeats. Plays a role in chromosome condensation and segregation during mitosis. During early development, required to specify the left-right axis by repressing expression of FGF8, leading to negatively regulate the dorsal organizer formation. This Danio rerio (Zebrafish) protein is Histone-lysine N-methyltransferase SETDB2 (setdb2).